A 239-amino-acid chain; its full sequence is MSNKKDITVKMSGGKKIREAREKVKPDTLYNLTNAVEQLKSASYVKFDPTLEIVMKLGIDPRHSDQMVRGVVNLPAGTGKIVRVAVICKEEREEEAKSAGADLVGSTNIIDEIKSGKINFDVCIATPDMMAAIGSVARILGPKGLMPNPKLGTVTLDIKNAIKNAKSGQVEYRAEKSGIIHAGLGKLSFSDQDLLKNLNAFIEAVIKAKPSGLKGSYLKAMYLSSTMGASVQIDLTSIA.

Belongs to the universal ribosomal protein uL1 family. As to quaternary structure, part of the 50S ribosomal subunit.

Its function is as follows. Binds directly to 23S rRNA. The L1 stalk is quite mobile in the ribosome, and is involved in E site tRNA release. Functionally, protein L1 is also a translational repressor protein, it controls the translation of the L11 operon by binding to its mRNA. The polypeptide is Large ribosomal subunit protein uL1 (Rickettsia akari (strain Hartford)).